Reading from the N-terminus, the 322-residue chain is Labrum-interacting protein from saliva LIPS-2 (322 aa).

The first 20 residues, 1–20, serve as a signal peptide directing secretion; sequence MKTSLPIVVLLTAVISGVHP. C27 and C62 form a disulfide bridge. Residues N168 and N175 are each glycosylated (N-linked (GlcNAc...) asparagine). C249 and C295 are joined by a disulfide.

Monomer in solution. Interacts (via the N-terminal domain) with cuticular protein Cp19 (via the C-terminus). In terms of processing, proteolytically cleaved by human mast cell tryptase and chymase. Post-translationally, glycosylated. Female salivary gland (at protein level). Female saliva (at protein level).

It localises to the secreted. Salivary protein that promotes mosquito blood feeding on the vertebrate host by inducing morphological changes in the mosquito labrum. Interacts with the mosquito labrum end tip and triggers salivation and probing. Modulates enzymatic activities of human tryptase and chymase. In Aedes albopictus (Asian tiger mosquito), this protein is Labrum-interacting protein from saliva LIPS-2.